Consider the following 201-residue polypeptide: Protein GrpE (201 aa).

Positions 1-11 are enriched in polar residues; sequence MTDSTNNQGTS. Positions 1-40 are disordered; sequence MTDSTNNQGTSGRPDDDHTTEEVASVFNDPGAQAPAGEPD.

This sequence belongs to the GrpE family. As to quaternary structure, homodimer.

It localises to the cytoplasm. Functionally, participates actively in the response to hyperosmotic and heat shock by preventing the aggregation of stress-denatured proteins, in association with DnaK and GrpE. It is the nucleotide exchange factor for DnaK and may function as a thermosensor. Unfolded proteins bind initially to DnaJ; upon interaction with the DnaJ-bound protein, DnaK hydrolyzes its bound ATP, resulting in the formation of a stable complex. GrpE releases ADP from DnaK; ATP binding to DnaK triggers the release of the substrate protein, thus completing the reaction cycle. Several rounds of ATP-dependent interactions between DnaJ, DnaK and GrpE are required for fully efficient folding. The polypeptide is Protein GrpE (Beijerinckia indica subsp. indica (strain ATCC 9039 / DSM 1715 / NCIMB 8712)).